The chain runs to 381 residues: G-protein coupled receptor homolog Q2/3L (381 aa).

The Extracellular segment spans residues 1–91 (MNYTLSTVSS…HCDDGVDTTS (91 aa)). N-linked (GlcNAc...) asparagine; by host glycans are attached at residues Asn2, Asn15, Asn19, Asn41, Asn50, Asn56, and Asn62. The chain crosses the membrane as a helical span at residues 92 to 112 (FGLITLYSTIFFLGLFGNIIV). At 113–126 (LTVLRKYKIKTIQD) the chain is on the cytoplasmic side. A helical membrane pass occupies residues 127–147 (MFLLNLTLSDLIFVLVFPFNL). At 148 to 165 (YDSIAKQWSLGDCLCKFK) the chain is on the extracellular side. A helical transmembrane segment spans residues 166–186 (AMFYFVGFYNSMSFITLMSID). Residues 187 to 206 (RYLAVVHPVKSMPIRTKRYG) lie on the Cytoplasmic side of the membrane. The chain crosses the membrane as a helical span at residues 207–227 (IVLSMVVWIVSTIESFPIMLF). Over 228–251 (YETKKVYGITYCHVFYNDNAKIWK) the chain is Extracellular. The helical transmembrane segment at 252 to 272 (LFINFEINIFGMIIPLTILLY) threads the bilayer. The Cytoplasmic segment spans residues 273–294 (CYYKILNTLKTSQTKNKKAIKM). The chain crosses the membrane as a helical span at residues 295 to 315 (VFLIVICSVLFLLPFSVTVFV). Residues 316–336 (SSLYLLNVFSGCMALRFVNLA) lie on the Extracellular side of the membrane. A helical membrane pass occupies residues 337 to 357 (VHVAEIVSLCHCFINPLIYAF). Over 358-381 (CSREFTKKLLRLRTTSSAGSISIG) the chain is Cytoplasmic.

This sequence belongs to the G-protein coupled receptor 1 family.

It is found in the host cell membrane. Putative chemokine receptor. In Ovis aries (Sheep), this protein is G-protein coupled receptor homolog Q2/3L.